Consider the following 355-residue polypeptide: Carbohydrate sulfotransferase 10 (355 aa).

Residues 1–6 (MHHRWL) lie on the Cytoplasmic side of the membrane. Residues 7–27 (LLVACFWVLFMLMVASKLITL) form a helical; Signal-anchor for type II membrane protein membrane-spanning segment. The Lumenal segment spans residues 28–355 (TMKDPEGYGN…FGYKEPTFLF (328 aa)). 2 N-linked (GlcNAc...) asparagine glycosylation sites follow: N93 and N98. Residues 126–132 (PKVGNTQ) and 188–196 (RDPFERLIS) each bind 3'-phosphoadenylyl sulfate. N316 carries an N-linked (GlcNAc...) asparagine glycan.

This sequence belongs to the sulfotransferase 2 family.

The protein localises to the golgi apparatus membrane. Its function is as follows. Catalyzes the transfer of sulfate to position 3 of terminal glucuronic acid of both protein- and lipid-linked oligosaccharides. Participates in biosynthesis of HNK-1 carbohydrate structure, a sulfated glucuronyl-lactosaminyl residue carried by many neural recognition molecules. The polypeptide is Carbohydrate sulfotransferase 10 (chst10) (Xenopus laevis (African clawed frog)).